Consider the following 84-residue polypeptide: MAETDSKAPAKAKPAALRKGALVKVNRSAYNDSLEAAASDPTAPDYIFEGPGELLLVKGDYGQVRWNRPVPDVWLRMDQLESCG.

It belongs to the complex I NdhO subunit family. In terms of assembly, NDH-1 can be composed of about 15 different subunits; different subcomplexes with different compositions have been identified which probably have different functions.

The protein localises to the cellular thylakoid membrane. The enzyme catalyses a plastoquinone + NADH + (n+1) H(+)(in) = a plastoquinol + NAD(+) + n H(+)(out). It carries out the reaction a plastoquinone + NADPH + (n+1) H(+)(in) = a plastoquinol + NADP(+) + n H(+)(out). In terms of biological role, NDH-1 shuttles electrons from an unknown electron donor, via FMN and iron-sulfur (Fe-S) centers, to quinones in the respiratory and/or the photosynthetic chain. The immediate electron acceptor for the enzyme in this species is believed to be plastoquinone. Couples the redox reaction to proton translocation, and thus conserves the redox energy in a proton gradient. Cyanobacterial NDH-1 also plays a role in inorganic carbon-concentration. The polypeptide is NAD(P)H-quinone oxidoreductase subunit O (Parasynechococcus marenigrum (strain WH8102)).